A 944-amino-acid chain; its full sequence is Leucine--tRNA ligase 2 (944 aa).

The short motif at 36–46 is the 'HIGH' region element; it reads PYPNSPWHIGH. The short motif at 623–627 is the 'KMSKS' region element; that stretch reads KMSKS. Lys626 is an ATP binding site.

Belongs to the class-I aminoacyl-tRNA synthetase family.

It localises to the cytoplasm. It carries out the reaction tRNA(Leu) + L-leucine + ATP = L-leucyl-tRNA(Leu) + AMP + diphosphate. This is Leucine--tRNA ligase 2 from Saccharolobus solfataricus (strain ATCC 35092 / DSM 1617 / JCM 11322 / P2) (Sulfolobus solfataricus).